Consider the following 138-residue polypeptide: ATP synthase epsilon chain, chloroplastic (138 aa).

This sequence belongs to the ATPase epsilon chain family. In terms of assembly, F-type ATPases have 2 components, CF(1) - the catalytic core - and CF(0) - the membrane proton channel. CF(1) has five subunits: alpha(3), beta(3), gamma(1), delta(1), epsilon(1). CF(0) has three main subunits: a, b and c.

It localises to the plastid. It is found in the chloroplast thylakoid membrane. In terms of biological role, produces ATP from ADP in the presence of a proton gradient across the membrane. The protein is ATP synthase epsilon chain, chloroplastic of Anthoceros angustus (Hornwort).